Here is a 258-residue protein sequence, read N- to C-terminus: Chymotrypsin-2 (258 aa).

The signal sequence occupies residues 1–17 (MLRKVFAVVSVLLVVSA). The propeptide at 18–32 (AKVTKLVLDDHYVNR) is activation peptide. The region spanning 33-255 (VVGGEVAKNG…YHEWVRTTMA (223 aa)) is the Peptidase S1 domain. C59 and C75 are disulfide-bonded. Residues H74 and D119 each act as charge relay system in the active site. 2 disulfide bridges follow: C182/C198 and C208/C232. S212 (charge relay system) is an active-site residue.

The protein belongs to the peptidase S1 family. After blood feeding, expression is induced in the midgut epithelium, followed by secretion into the midgut lumen.

It localises to the secreted. It catalyses the reaction Preferential cleavage: Tyr-|-Xaa, Trp-|-Xaa, Phe-|-Xaa, Leu-|-Xaa.. The polypeptide is Chymotrypsin-2 (CHYM2) (Anopheles gambiae (African malaria mosquito)).